The primary structure comprises 413 residues: Probable tRNA pseudouridine synthase D (413 aa).

The active-site Nucleophile is aspartate 97. In terms of domain architecture, TRUD spans 167–370 (AVPNYYGYQR…YGSYRRARLE (204 aa)).

Belongs to the pseudouridine synthase TruD family.

It carries out the reaction uridine(13) in tRNA = pseudouridine(13) in tRNA. Its function is as follows. Could be responsible for synthesis of pseudouridine from uracil-13 in transfer RNAs. This is Probable tRNA pseudouridine synthase D from Pyrobaculum arsenaticum (strain DSM 13514 / JCM 11321 / PZ6).